The following is a 119-amino-acid chain: C-C motif chemokine 24 (119 aa).

Residues 1-26 (MAGLMTIVTSLLFLGVCAHHIIPTGS) form the signal peptide. 2 disulfide bridges follow: cysteine 33/cysteine 58 and cysteine 34/cysteine 74. Asparagine 115 is a glycosylation site (N-linked (GlcNAc...) asparagine).

The protein belongs to the intercrine beta (chemokine CC) family. N-glycosylated. Activated monocytes and activated T lymphocytes.

The protein resides in the secreted. Its function is as follows. Chemotactic for resting T-lymphocytes, and eosinophils. Has lower chemotactic activity for neutrophils but none for monocytes and activated lymphocytes. Is a strong suppressor of colony formation by a multipotential hematopoietic progenitor cell line. Binds to CCR3. The chain is C-C motif chemokine 24 from Homo sapiens (Human).